The primary structure comprises 232 residues: Mediator of RNA polymerase II transcription subunit 18 (232 aa).

It belongs to the Mediator complex subunit 18 family. As to quaternary structure, component of the Mediator complex.

It is found in the nucleus. Functionally, component of the Mediator complex, a coactivator involved in the regulated transcription of nearly all RNA polymerase II-dependent genes. Mediator functions as a bridge to convey information from gene-specific regulatory proteins to the basal RNA polymerase II transcription machinery. Mediator is recruited to promoters by direct interactions with regulatory proteins and serves as a scaffold for the assembly of a functional preinitiation complex with RNA polymerase II and the general transcription factors. The sequence is that of Mediator of RNA polymerase II transcription subunit 18 (mdt-18) from Caenorhabditis elegans.